Here is a 239-residue protein sequence, read N- to C-terminus: Bidirectional sugar transporter SWEET8 (239 aa).

The Extracellular portion of the chain corresponds to 1–6; the sequence is MVDAKQ. Residues 7–27 traverse the membrane as a helical segment; sequence VRFIIGVIGNVISFGLFAAPA. One can recognise a MtN3/slv 1 domain in the interval 9–98; the sequence is FIIGVIGNVI…VYLMYCGHKK (90 aa). Topologically, residues 28–44 are cytoplasmic; sequence KTFWRIFKKKSVEEFSY. Residues 45-65 form a helical membrane-spanning segment; it reads VPYVATVMNCMLWVFYGLPVV. The Extracellular segment spans residues 66-69; that stretch reads HKDS. The chain crosses the membrane as a helical span at residues 70–90; that stretch reads ILVSTINGVGLVIELFYVGVY. Residues 91–103 are Cytoplasmic-facing; sequence LMYCGHKKNHRRN. The helical transmembrane segment at 104–124 threads the bilayer; that stretch reads ILGFLALEVILVVAIILITLF. Over 125 to 135 the chain is Extracellular; the sequence is ALKGDFVKQTF. The region spanning 134–185 is the MtN3/slv 2 domain; sequence TFVGVICDVFNIAMYGAPSLAIIKVVKTKSVEYMPFLLSLVCFVNAGIWTTY. A helical transmembrane segment spans residues 136 to 156; it reads VGVICDVFNIAMYGAPSLAII. Residues 157-168 lie on the Cytoplasmic side of the membrane; the sequence is KVVKTKSVEYMP. A helical transmembrane segment spans residues 169–189; sequence FLLSLVCFVNAGIWTTYSLIF. At 190–194 the chain is on the extracellular side; sequence KIDYY. A helical membrane pass occupies residues 195–215; the sequence is VLASNGIGTFLALSQLIVYFM. The Cytoplasmic segment spans residues 216–239; it reads YYKSTPKEKTVKPSEVEISATERV.

Belongs to the SWEET sugar transporter family. Forms homooligomers and heterooligomers with SWEET4, SWEET5, SWEET6, SWEET7, SWEET9, SWEET10, SWEET11, SWEET13, SWEET15, SWEET16 and SWEET17. Expressed in inflorescences, embryo sacs and pollen, and at a lower level in stems. Barely detected in roots, leaves and seedlings.

Its subcellular location is the cell membrane. Its function is as follows. Mediates both low-affinity uptake and efflux of sugar across the plasma membrane. Required, in pollen, for microspore cell integrity and primexine pattern formation. The chain is Bidirectional sugar transporter SWEET8 from Arabidopsis thaliana (Mouse-ear cress).